A 332-amino-acid chain; its full sequence is Decaprenyl-phosphate phosphoribosyltransferase (332 aa).

The segment covering 1–12 (MSEHAAEHHRDT) has biased composition (basic and acidic residues). The disordered stretch occupies residues 1 to 36 (MSEHAAEHHRDTQNFLTSEPHTTAIEDNKKRQPPKN). 2 helical membrane-spanning segments follow: residues 50 to 70 (WVKN…AIFN) and 74 to 94 (IIDV…IYLV). Positions 52 and 92 each coordinate 5-phospho-alpha-D-ribose 1-diphosphate. Asn95 and Asp99 together coordinate Mg(2+). Residue Lys109 participates in 5-phospho-alpha-D-ribose 1-diphosphate binding. 2 helical membrane-spanning segments follow: residues 114 to 134 (IAAG…LIAL) and 146 to 166 (VALA…CFGW). Lys167 and Arg184 together coordinate 5-phospho-alpha-D-ribose 1-diphosphate. 2 helical membrane-spanning segments follow: residues 169-189 (MPVI…MAGG) and 190-210 (VAAG…GSLF). Residue Lys215 coordinates trans,octa-cis-decaprenyl phosphate. A run of 3 helical transmembrane segments spans residues 244 to 264 (FVWT…GFDL), 273 to 293 (PWYQ…AAGV), and 310 to 330 (VLQV…YIMP).

The protein belongs to the UbiA prenyltransferase family. DPPR synthase subfamily. The cofactor is Mg(2+).

The protein resides in the cell inner membrane. The catalysed reaction is trans,octa-cis-decaprenyl phosphate + 5-phospho-alpha-D-ribose 1-diphosphate + H(+) = trans,octa-cis-decaprenylphospho-beta-D-ribofuranose 5-phosphate + diphosphate. The protein operates within cell wall biogenesis; cell wall polysaccharide biosynthesis. Its function is as follows. Involved in the biosynthesis of decaprenylphosphoryl arabinose (DPA) a precursor for arabinan synthesis in mycobacterial cell wall biosynthesis. Catalyzes the transfer of a 5-phosphoribosyl residue from phosphoribose diphosphate (PRPP) to decaprenyl phosphate (DP) to form decaprenylphosphoryl-5-phosphoribose (DPPR). This Corynebacterium glutamicum (strain ATCC 13032 / DSM 20300 / JCM 1318 / BCRC 11384 / CCUG 27702 / LMG 3730 / NBRC 12168 / NCIMB 10025 / NRRL B-2784 / 534) protein is Decaprenyl-phosphate phosphoribosyltransferase.